Here is a 570-residue protein sequence, read N- to C-terminus: uncharacterized protein (570 aa).

Over residues 1-15 the composition is skewed to low complexity; that stretch reads MTESIISSRTASISS. Positions 1-34 are disordered; it reads MTESIISSRTASISSKEGYEIRQGSTDSSSLDLE. Ser-14 is modified (phosphoserine). Transmembrane regions (helical) follow at residues 96 to 116, 141 to 161, 163 to 183, 198 to 218, 229 to 249, 261 to 281, 328 to 348, 369 to 389, 397 to 417, 423 to 443, 457 to 477, and 485 to 505; these read WKLYIYLLLMLGFLDMMLFIG, NLNTLFYVGYIVGQFPGHYIM, TFPLGKFVGLVTFSWSVIVFL, FFLGFTESCLLPAMEATMGMF, PVFWISCLSCGIPAGFIAYGL, LFMIITGGITFFLSIFLFFYY, PITWLFTFAAFTLMLSNNLAY, VALAGYNTVSAIIATFAMYLI, AMFWMLPSITGGIAFVALPWS, LATMIIASDFGITYIIALGWT, GLMFMVGYAIANIISPQLWQS, and PAWIVQIVVAWFVTPIIYLVA.

This sequence belongs to the major facilitator superfamily. Allantoate permease family.

It is found in the endoplasmic reticulum. The protein localises to the membrane. This is an uncharacterized protein from Schizosaccharomyces pombe (strain 972 / ATCC 24843) (Fission yeast).